The sequence spans 168 residues: G/U mismatch-specific DNA glycosylase (168 aa).

It belongs to the uracil-DNA glycosylase (UDG) superfamily. TDG/mug family. In terms of assembly, binds DNA as a monomer.

It localises to the cytoplasm. It carries out the reaction Specifically hydrolyzes mismatched double-stranded DNA and polynucleotides, releasing free uracil.. Functionally, excises ethenocytosine and uracil, which can arise by alkylation or deamination of cytosine, respectively, from the corresponding mispairs with guanine in ds-DNA. It is capable of hydrolyzing the carbon-nitrogen bond between the sugar-phosphate backbone of the DNA and the mispaired base. The complementary strand guanine functions in substrate recognition. Required for DNA damage lesion repair in stationary-phase cells. The chain is G/U mismatch-specific DNA glycosylase from Citrobacter koseri (strain ATCC BAA-895 / CDC 4225-83 / SGSC4696).